Reading from the N-terminus, the 463-residue chain is Argininosuccinate lyase (463 aa).

It belongs to the lyase 1 family. Argininosuccinate lyase subfamily.

The protein localises to the cytoplasm. The enzyme catalyses 2-(N(omega)-L-arginino)succinate = fumarate + L-arginine. It participates in amino-acid biosynthesis; L-arginine biosynthesis; L-arginine from L-ornithine and carbamoyl phosphate: step 3/3. The protein is Argininosuccinate lyase of Ruegeria pomeroyi (strain ATCC 700808 / DSM 15171 / DSS-3) (Silicibacter pomeroyi).